The primary structure comprises 119 residues: C-C motif chemokine 24 (119 aa).

Residues 1–26 form the signal peptide; the sequence is MAGLMTIVTSLLFLGVCAHHIIPTGS. 2 disulfides stabilise this stretch: C33-C58 and C34-C74. N115 carries N-linked (GlcNAc...) asparagine glycosylation.

Belongs to the intercrine beta (chemokine CC) family. Post-translationally, N-glycosylated. Activated monocytes and activated T lymphocytes.

It is found in the secreted. Its function is as follows. Chemotactic for resting T-lymphocytes, and eosinophils. Has lower chemotactic activity for neutrophils but none for monocytes and activated lymphocytes. Is a strong suppressor of colony formation by a multipotential hematopoietic progenitor cell line. Binds to CCR3. This is C-C motif chemokine 24 from Homo sapiens (Human).